We begin with the raw amino-acid sequence, 169 residues long: Desumoylating isopeptidase 1 (169 aa).

The region spanning 8–150 (HLVRLYVYDM…LGQALRPLLD (143 aa)) is the PPPDE domain. Residue His-39 is part of the active site. The Nuclear export signal 1 motif lies at 84-92 (IFLEYLSSL). Residue Cys-109 is part of the active site. Positions 140–154 (PLGQALRPLLDSVQI) match the Nuclear export signal 2 motif.

Belongs to the DeSI family. As to quaternary structure, homodimer.

It is found in the cytoplasm. The protein resides in the nucleus. The enzyme catalyses S-hexadecanoyl-L-cysteinyl-[protein] + H2O = L-cysteinyl-[protein] + hexadecanoate + H(+). Its function is as follows. Protease which deconjugates SUMO1, SUMO2 and SUMO3 from some substrate proteins. Has isopeptidase but not SUMO-processing activity. Collaborates with ubqln4 in the export of ubiquitinated proteins from the nucleus to the cytoplasm. Exhibits palmitoyl protein thioesterase (S-depalmitoylation) activity towards synthetic substrates 4-methylumbelliferyl-6-S-palmitoyl-beta-D-glucopyranoside and S-depalmitoylation probe 5 (DPP-5). This is Desumoylating isopeptidase 1 from Xenopus laevis (African clawed frog).